The following is a 3527-amino-acid chain: BEACH domain-containing protein A2 (3527 aa).

Disordered regions lie at residues 25 to 46 (AGEA…PSSS), 385 to 423 (SSPH…LNSR), and 454 to 490 (ESSG…CEQG). Residues 28 to 46 (AISDPTTPPSSSQASPSSS) are compositionally biased toward low complexity. Positions 455-469 (SSGTSTSLLSQTKLT) are enriched in low complexity. Residues 472–481 (SRRQTPSANN) are compositionally biased toward polar residues. LRR repeat units lie at residues 1447–1470 (KLES…NYED), 1499–1522 (FSHL…VLSN), 1542–1565 (SIQI…SHNL), 1566–1588 (AILR…DVEV), and 2001–2024 (SSEM…SRSS). Disordered regions lie at residues 1992 to 2023 (GDHV…DSRS) and 2046 to 2081 (IPSP…SQGS). A compositionally biased stretch (polar residues) spans 1998 to 2020 (VSASSEMKSLDLTGSSSQVQPID). LRR repeat units follow at residues 2128–2151 (TEQI…VDPE), 2221–2247 (LLSI…LLSI), and 2313–2336 (VSAV…LDTD). The tract at residues 2658 to 2680 (VNTDEKSETGSPIKSSSGKMDEI) is disordered. Positions 2666–2675 (TGSPIKSSSG) are enriched in polar residues. The BEACH-type PH domain maps to 2704–2871 (EHLEKIRFRY…EREEVFRNLL (168 aa)). In terms of domain architecture, BEACH spans 2896–3188 (GSRLFKLMAK…QLFQKPHVKR (293 aa)). 4 WD repeats span residues 3272–3311 (HEGN…PRGS), 3322–3361 (AHTA…FVRQ), 3410–3451 (DLIV…DPVS), and 3483–3522 (FHKQ…LKAS).

The chain is BEACH domain-containing protein A2 from Arabidopsis thaliana (Mouse-ear cress).